The chain runs to 697 residues: MTTSHILSAVDPTTGLSGNVSGGGGGGGAGGGAGSGSPQHVTHNGHGHGHGLGGVAAVSGGGASVSGNGGHRVVGGAGSPNELDRNLRISLDDRELWLRFQNLTNEMIVTKNGRRMFPVVKISASGLDPAAMYTVLLEFVQIDSHRWKYVNGEWVPGGKAEVPPSNPIYVHPESPNFGAHWMKEPISFAKVKLTNKTNGNGQIMLNSLHKYEPRVHLVRVGSEQRHVVTYPFPETQFIAVTAYQNEEVTSLKIKYNPFAKAFLDAKERPDTLYPHDTHYGWLIPPPTHYTAAAAAVAAPPPLSIAQSHGLVASCPSVSSAESVGPSSGGSCDRYGRSLSSRSVAPTRTTPYSRPRVVSGSGSNGSAGNASSTSPQPPSAPQTPTSLHSTSTGSVSTSVSSSSGGGIGSAPSTGCFSSSYAQSGFMSVDASPTASVFSYPSSWQSNGNYWNATSVPGPMPMNVCSGRNISSHNSPSPTNGSPSYTTSSPSYTIHHLTPHSHQYNMAQTDIYGTGVGVGGGAGTTGSPQAAYGAAAHQVYHPTPTSPTHQLYTNAVLNAPSALSYSASGWHNGSGAEYGLYQNAAAAYYQPEYIPLEIGYATHPLEPVDVSKTLDDPQAAMYKPSDEQGSVITLECASSSLKSSHDIKIESSSLEHAGERGTVGGGAAVVSVPTAVVNGAPAVAADTWTPLTPPQSTLQ.

A disordered region spans residues methionine 1–glycine 60. Gly residues-rich tracts occupy residues valine 20–serine 35 and histidine 50–glycine 60. The T-box DNA-binding region spans leucine 96–aspartate 264. Positions serine 316–serine 330 are enriched in low complexity. 2 disordered regions span residues serine 316 to glycine 407 and valine 462 to proline 488. Residues serine 337–tyrosine 351 are compositionally biased toward polar residues. Composition is skewed to low complexity over residues serine 352–serine 373, glutamine 381–serine 401, and serine 469–proline 488.

It is found in the nucleus. Its function is as follows. Required for the specification of the hindgut and anal pads. The polypeptide is T-related protein (byn) (Drosophila melanogaster (Fruit fly)).